The following is a 179-amino-acid chain: Large ribosomal subunit protein uL5 (179 aa).

Belongs to the universal ribosomal protein uL5 family. In terms of assembly, part of the 50S ribosomal subunit; part of the 5S rRNA/L5/L18/L25 subcomplex. Contacts the 5S rRNA and the P site tRNA. Forms a bridge to the 30S subunit in the 70S ribosome.

This is one of the proteins that bind and probably mediate the attachment of the 5S RNA into the large ribosomal subunit, where it forms part of the central protuberance. In the 70S ribosome it contacts protein S13 of the 30S subunit (bridge B1b), connecting the 2 subunits; this bridge is implicated in subunit movement. Contacts the P site tRNA; the 5S rRNA and some of its associated proteins might help stabilize positioning of ribosome-bound tRNAs. The sequence is that of Large ribosomal subunit protein uL5 from Marinomonas sp. (strain MWYL1).